We begin with the raw amino-acid sequence, 617 residues long: Putative metal ion transporter C17A12.14 (617 aa).

The interval 1 to 141 is disordered; sequence MPSNTSRSVP…GKNTRDQPSP (141 aa). Serine 105 bears the Phosphoserine mark. Residues 117–136 show a composition bias toward basic and acidic residues; that stretch reads SHPEDIQRKEFETENGKNTR. Phosphoserine occurs at positions 152, 162, 226, and 241. 2 consecutive transmembrane segments (helical) span residues 560–580 and 590–610; these read TILG…GMNV and LGWF…SFIL.

Belongs to the CorA metal ion transporter (MIT) (TC 1.A.35) family. Interacts with sad1.

The protein resides in the membrane. The chain is Putative metal ion transporter C17A12.14 from Schizosaccharomyces pombe (strain 972 / ATCC 24843) (Fission yeast).